Reading from the N-terminus, the 446-residue chain is Dihydroorotate dehydrogenase (quinone), mitochondrial (446 aa).

A mitochondrion-targeting transit peptide spans methionine 1–alanine 13. A helical transmembrane segment spans residues alanine 40–leucine 57. Residues alanine 125–lysine 129 and serine 149 each bind FMN. Residue lysine 129 coordinates substrate. Residue asparagine 174–phenylalanine 178 participates in substrate binding. Asparagine 222 and asparagine 252 together coordinate FMN. Residues asparagine 252 and asparagine 252–asparagine 257 contribute to the substrate site. The active-site Nucleophile is the serine 255. Lysine 303 and serine 331 together coordinate FMN. Position 332 to 333 (asparagine 332 to threonine 333) interacts with substrate. FMN-binding positions include glycine 357, glycine 387, and tyrosine 408–threonine 409.

The protein belongs to the dihydroorotate dehydrogenase family. Type 2 subfamily. FMN serves as cofactor.

The protein localises to the mitochondrion inner membrane. It carries out the reaction (S)-dihydroorotate + a quinone = orotate + a quinol. It participates in pyrimidine metabolism; UMP biosynthesis via de novo pathway; orotate from (S)-dihydroorotate (quinone route): step 1/1. Its activity is regulated as follows. The activity is dependent of the presence of oxygen. Catalyzes the conversion of dihydroorotate to orotate with quinone as electron acceptor. This Lachancea kluyveri (strain ATCC 58438 / CBS 3082 / BCRC 21498 / NBRC 1685 / JCM 7257 / NCYC 543 / NRRL Y-12651) (Yeast) protein is Dihydroorotate dehydrogenase (quinone), mitochondrial (URA9).